We begin with the raw amino-acid sequence, 2410 residues long: Genome polyprotein 1 (2410 aa).

The interval 1–21 is disordered; that stretch reads MEQTLAQAVSRRNKTDTPMAE. The Helicase ATP-binding domain maps to 474 to 632; the sequence is AMADANNCWS…AARKYPLHVE (159 aa). 487–494 serves as a coordination point for ATP; sequence GHTGSGKS. Positions 583-586 match the DEAH box motif; the sequence is DEAH. Residues 647 to 813 form the Helicase C-terminal domain; that stretch reads GGGDLLDISK…NVPFYMNETF (167 aa). Tyrosine 1234 carries the O-(5'-phospho-RNA)-tyrosine modification. The Peptidase C4 domain maps to 1359-1573; it reads ITLEASTGIL…CGYASHTALF (215 aa). Catalysis depends on for nuclear inclusion protein A activity residues histidine 1404, aspartate 1440, and cysteine 1507. The 124-residue stretch at 1857–1980 folds into the RdRp catalytic domain; the sequence is WLHGSGDGSR…AISPQFDEEF (124 aa). The tract at residues 2175–2200 is disordered; the sequence is MPTEDDGKLKTPSGARIPSSAADGNW.

The protein belongs to the bymoviruses polyprotein 1 family. In terms of processing, VPg is uridylylated by the polymerase and is covalently attached to the 5'-end of the genomic RNA. This uridylylated form acts as a nucleotide-peptide primer for the polymerase. The viral RNA1 of bymoviruses is expressed as a single polyprotein which undergoes post-translational proteolytic processing by the main proteinase NIa-pro resulting in the production of at least eight individual proteins.

It is found in the host cytoplasmic vesicle. Its subcellular location is the virion. The enzyme catalyses RNA(n) + a ribonucleoside 5'-triphosphate = RNA(n+1) + diphosphate. It carries out the reaction Hydrolyzes glutaminyl bonds, and activity is further restricted by preferences for the amino acids in P6 - P1' that vary with the species of potyvirus, e.g. Glu-Xaa-Xaa-Tyr-Xaa-Gln-|-(Ser or Gly) for the enzyme from tobacco etch virus. The natural substrate is the viral polyprotein, but other proteins and oligopeptides containing the appropriate consensus sequence are also cleaved.. Its function is as follows. Indispensable for virus replication. Functionally, mediates the cap-independent, EIF4E-dependent translation of viral genomic RNAs. Binds to the cap-binding site of host EIF4E and thus interferes with the host EIF4E-dependent mRNA export and translation. VPg-RNA directly binds EIF4E and is a template for transcription. Also forms trimeric complexes with EIF4E-EIF4G, which are templates for translation. In terms of biological role, has RNA-binding and proteolytic activities. An RNA-dependent RNA polymerase that plays an essential role in the virus replication. This chain is Genome polyprotein 1, found in Hordeum vulgare (Barley).